Reading from the N-terminus, the 376-residue chain is Putative F-box only protein 9 (376 aa).

An F-box domain is found at 1–44; sequence MSDLPPDLVEDILSRVPATSLKRLRFTCKQWNSLFKNRRFTEKH.

The protein is Putative F-box only protein 9 (FBX9) of Arabidopsis thaliana (Mouse-ear cress).